The sequence spans 99 residues: MAQGQRKFQARKPAKSKTAATASEKNRGPRKGGRVIAPKKARVVQQQKLKKNLEVGIRKKIEHDVVMKASSSLPKRLALLKAPAKKKGAAAATSSKTPS.

The tract at residues Met-1–Ala-37 is disordered. Residues Gly-28 to Ala-37 show a composition bias toward basic residues.

Belongs to the UPF0390 family.

Its function is as follows. May have a potential role in hypercalcemia of malignancy. This Pongo abelii (Sumatran orangutan) protein is Leydig cell tumor 10 kDa protein homolog.